The sequence spans 250 residues: Ubiquinone/menaquinone biosynthesis C-methyltransferase UbiE (250 aa).

Residues Thr-74, Asp-94, 122–123 (DA), and Ser-139 each bind S-adenosyl-L-methionine.

Belongs to the class I-like SAM-binding methyltransferase superfamily. MenG/UbiE family.

The enzyme catalyses a 2-demethylmenaquinol + S-adenosyl-L-methionine = a menaquinol + S-adenosyl-L-homocysteine + H(+). It carries out the reaction a 2-methoxy-6-(all-trans-polyprenyl)benzene-1,4-diol + S-adenosyl-L-methionine = a 5-methoxy-2-methyl-3-(all-trans-polyprenyl)benzene-1,4-diol + S-adenosyl-L-homocysteine + H(+). Its pathway is quinol/quinone metabolism; menaquinone biosynthesis; menaquinol from 1,4-dihydroxy-2-naphthoate: step 2/2. It functions in the pathway cofactor biosynthesis; ubiquinone biosynthesis. In terms of biological role, methyltransferase required for the conversion of demethylmenaquinol (DMKH2) to menaquinol (MKH2) and the conversion of 2-polyprenyl-6-methoxy-1,4-benzoquinol (DDMQH2) to 2-polyprenyl-3-methyl-6-methoxy-1,4-benzoquinol (DMQH2). The protein is Ubiquinone/menaquinone biosynthesis C-methyltransferase UbiE of Ruegeria sp. (strain TM1040) (Silicibacter sp.).